The primary structure comprises 412 residues: Argininosuccinate synthase (412 aa).

ATP-binding positions include 20-28 (AYSGGLDTS) and A48. L-citrulline contacts are provided by Y100 and S105. G130 serves as a coordination point for ATP. L-aspartate-binding residues include T132, N136, and D137. L-citrulline is bound at residue N136. L-citrulline-binding residues include R140, S189, S198, E274, and Y286.

Belongs to the argininosuccinate synthase family. Type 1 subfamily. In terms of assembly, homotetramer.

It is found in the cytoplasm. The enzyme catalyses L-citrulline + L-aspartate + ATP = 2-(N(omega)-L-arginino)succinate + AMP + diphosphate + H(+). Its pathway is amino-acid biosynthesis; L-arginine biosynthesis; L-arginine from L-ornithine and carbamoyl phosphate: step 2/3. The protein is Argininosuccinate synthase of Shewanella halifaxensis (strain HAW-EB4).